The sequence spans 276 residues: Small ribosomal subunit protein uS2 (276 aa).

The interval 254–276 is disordered; sequence LAGATAAAPAEGAVATETTPTEG. The span at 255–276 shows a compositional bias: low complexity; sequence AGATAAAPAEGAVATETTPTEG.

The protein belongs to the universal ribosomal protein uS2 family.

This chain is Small ribosomal subunit protein uS2, found in Mycobacterium ulcerans (strain Agy99).